We begin with the raw amino-acid sequence, 216 residues long: Ornithine decarboxylase antizyme 1 (216 aa).

It belongs to the ODC antizyme family. Interacts with ODC1 and thereby sterically blocks ODC homodimerization.

Ornithine decarboxylase (ODC) antizyme protein that negatively regulates ODC activity and intracellular polyamine biosynthesis and uptake in response to increased intracellular polyamine levels. Binds to ODC monomers, inhibiting the assembly of the functional ODC homodimer, and targets the monomers for ubiquitin-independent proteolytic destruction by the 26S proteasome. This is Ornithine decarboxylase antizyme 1 (oaz1) from Xenopus laevis (African clawed frog).